Reading from the N-terminus, the 31-residue chain is MERSTQELFINFTVVLITVLLMWLLVRSYQY.

Over 1-7 the chain is Cytoplasmic; it reads MERSTQE. The helical transmembrane segment at 8–26 threads the bilayer; the sequence is LFINFTVVLITVLLMWLLV. At 27–31 the chain is on the lumenal side; sequence RSYQY.

This sequence belongs to the sarcolipin family. Homooligomer. Can also form heterooligomers with other sarcoplasmic/endoplasmic reticulum calcium ATPase (SERCA) regulators ARLN, ERLN, PLN and STRIT1/DWORF. Monomer. Interacts with calcium ATPase ATP2A1/SERCA1. Interacts as a monomer with ATP2A2/SERCA2; the interaction decreases ATP2A2 Ca(2+) affinity. Interacts with VMP1; VMP1 competes with PLN and SLN to prevent them from forming an inhibitory complex with ATP2A2.

It localises to the sarcoplasmic reticulum membrane. The protein localises to the endoplasmic reticulum membrane. Its function is as follows. Reversibly inhibits the activity of ATP2A1/SERCA1 and ATP2A2/SERCA2 in sarcoplasmic reticulum by decreasing the apparent affinity of the ATPase for Ca(2+). Also inhibits the activity of ATP2A3/SERCA3. Modulates calcium re-uptake during muscle relaxation and plays an important role in calcium homeostasis in muscle. Required for muscle-based, non-shivering thermogenesis. This Rattus norvegicus (Rat) protein is Sarcolipin (Sln).